We begin with the raw amino-acid sequence, 254 residues long: Dihydroorotate dehydrogenase B (NAD(+)), electron transfer subunit (254 aa).

The FAD-binding FR-type domain maps to 1 to 99 (MLQTEMKVIQ…LGPLGKGFDI (99 aa)). FAD contacts are provided by residues 50 to 53 (RPIS), 67 to 69 (LYR), and 74 to 75 (GT). Positions 218, 223, 226, and 241 each coordinate [2Fe-2S] cluster.

The protein belongs to the PyrK family. Heterotetramer of 2 PyrK and 2 PyrD type B subunits. [2Fe-2S] cluster is required as a cofactor. The cofactor is FAD.

Its pathway is pyrimidine metabolism; UMP biosynthesis via de novo pathway; orotate from (S)-dihydroorotate (NAD(+) route): step 1/1. Functionally, responsible for channeling the electrons from the oxidation of dihydroorotate from the FMN redox center in the PyrD type B subunit to the ultimate electron acceptor NAD(+). The sequence is that of Dihydroorotate dehydrogenase B (NAD(+)), electron transfer subunit from Listeria monocytogenes serotype 4a (strain HCC23).